The following is a 256-amino-acid chain: Putative ankyrin repeat protein PAE1861 (256 aa).

ANK repeat units lie at residues 1 to 30, 34 to 63, 67 to 92, 93 to 122, 124 to 151, 155 to 184, 188 to 214, and 218 to 245; these read MDCNNLLNAARRGEAELLTRLLNEGCSPDV, YGRTPLYYAAERGDVGTVDLLIKAGADPNA, EGKTPIIIATQSRKFGVIPLLSASAV, GVEEALYTAARNGCHKAVRYMLARGVRPGA, HGESLLHLVAGDAGLVKLLLEYGVDPNA, HGKTPLHMASEHNCAQCVELLLKRGPDVNV, AGRTPLHYADDVDCIKLLLRYGADLNA, and MGRTPLHYAEDGLAAEALLKRGARPVPD.

The chain is Putative ankyrin repeat protein PAE1861 from Pyrobaculum aerophilum (strain ATCC 51768 / DSM 7523 / JCM 9630 / CIP 104966 / NBRC 100827 / IM2).